Consider the following 445-residue polypeptide: Inositol-pentakisphosphate 2-kinase IPK1 (445 aa).

Residues G19–N22 and R40 contribute to the ATP site. R127 lines the substrate pocket. ATP is bound by residues S144 to H146 and E162 to K164. The EXKPK motif motif lies at E162–K166. Residues K166, K196, and N234 each coordinate substrate. Position 237 (R237) interacts with ATP. Zn(2+) is bound by residues H312, C322, C325, and H341. D363 is a substrate binding site. Position 402 (D402) interacts with ATP. Substrate is bound by residues K406, K410, and Y414.

Belongs to the IPK1 type 2 family. It depends on Zn(2+) as a cofactor.

It catalyses the reaction 1D-myo-inositol 1,3,4,5,6-pentakisphosphate + ATP = 1D-myo-inositol hexakisphosphate + ADP + H(+). In terms of biological role, phosphorylates Ins(1,3,4,5,6)P5 at position 2 to form Ins(1,2,3,4,5,6)P6 (InsP6 or phytate). Phytate is a regulator of intracellular signaling, a highly abundant animal antinutrient, and a phosphate store in plant seeds. Also phosphorylates Ins(1,3,4,6)P4 and Ins(1,4,5,6)P4 to produce Ins(1,2,3,4,6)P5 and Ins(1,2,4,5,6)P5. This is Inositol-pentakisphosphate 2-kinase IPK1 from Oryza sativa subsp. indica (Rice).